The sequence spans 163 residues: Lectin-like protein EP153R (163 aa).

The Cytoplasmic portion of the chain corresponds to 1-26 (MFSNKKYIGLINKKEGLKKKIDDYSI). The helical transmembrane segment at 27–47 (LIIGILIGTNILSLIINIIGE) threads the bilayer. The Extracellular segment spans residues 48–163 (INKPICYQNN…YTDLLFICSK (116 aa)). Residues C63 and C74 are joined by a disulfide bond. The interval 63 to 162 (CPKDWVGYNN…HYTDLLFICS (100 aa)) is lectin-like. N-linked (GlcNAc...) asparagine; by host glycans are attached at residues N84, N96, N97, N103, N109, N115, N129, and N135. Residues C92 and C161 are joined by a disulfide bond.

Belongs to the asfivirus lectin-like protein family. As to quaternary structure, homodimer.

It localises to the host endoplasmic reticulum membrane. Functionally, down-regulates MHC-I expression by impairing the appropriate configuration or presentation into the plasma membrane of the latter. Participates in viral hemadsorption, which may help viral spread. Reduces the transactivating activity of host TP53, thus inhibiting apoptosis. Non-essential for virus growth in swine macrophage cell cultures. The sequence is that of Lectin-like protein EP153R from African swine fever virus (isolate Warthog/Namibia/Wart80/1980) (ASFV).